We begin with the raw amino-acid sequence, 333 residues long: Fructose-1,6-bisphosphatase class 1 (333 aa).

Positions 92, 114, 116, and 117 each coordinate Mg(2+). Substrate-binding positions include Asp117–Ser120 and Asn209. Glu279 serves as a coordination point for Mg(2+).

Belongs to the FBPase class 1 family. Homotetramer. Mg(2+) serves as cofactor.

It localises to the cytoplasm. The catalysed reaction is beta-D-fructose 1,6-bisphosphate + H2O = beta-D-fructose 6-phosphate + phosphate. The protein operates within carbohydrate biosynthesis; gluconeogenesis. The chain is Fructose-1,6-bisphosphatase class 1 from Alkalilimnicola ehrlichii (strain ATCC BAA-1101 / DSM 17681 / MLHE-1).